The sequence spans 680 residues: tRNA 5-methylaminomethyl-2-thiouridine biosynthesis bifunctional protein MnmC (680 aa).

A tRNA (mnm(5)s(2)U34)-methyltransferase region spans residues 1-245 (MSHPPIQTAT…KREMLTGILP (245 aa)). The interval 270 to 680 (IGGGIVSALT…PVQQRVSVLS (411 aa)) is FAD-dependent cmnm(5)s(2)U34 oxidoreductase.

In the N-terminal section; belongs to the methyltransferase superfamily. tRNA (mnm(5)s(2)U34)-methyltransferase family. This sequence in the C-terminal section; belongs to the DAO family. FAD serves as cofactor.

It localises to the cytoplasm. It catalyses the reaction 5-aminomethyl-2-thiouridine(34) in tRNA + S-adenosyl-L-methionine = 5-methylaminomethyl-2-thiouridine(34) in tRNA + S-adenosyl-L-homocysteine + H(+). In terms of biological role, catalyzes the last two steps in the biosynthesis of 5-methylaminomethyl-2-thiouridine (mnm(5)s(2)U) at the wobble position (U34) in tRNA. Catalyzes the FAD-dependent demodification of cmnm(5)s(2)U34 to nm(5)s(2)U34, followed by the transfer of a methyl group from S-adenosyl-L-methionine to nm(5)s(2)U34, to form mnm(5)s(2)U34. The chain is tRNA 5-methylaminomethyl-2-thiouridine biosynthesis bifunctional protein MnmC from Yersinia enterocolitica serotype O:8 / biotype 1B (strain NCTC 13174 / 8081).